A 262-amino-acid polypeptide reads, in one-letter code: 3-deoxy-manno-octulosonate cytidylyltransferase (262 aa).

This sequence belongs to the KdsB family.

The protein resides in the cytoplasm. The catalysed reaction is 3-deoxy-alpha-D-manno-oct-2-ulosonate + CTP = CMP-3-deoxy-beta-D-manno-octulosonate + diphosphate. The protein operates within nucleotide-sugar biosynthesis; CMP-3-deoxy-D-manno-octulosonate biosynthesis; CMP-3-deoxy-D-manno-octulosonate from 3-deoxy-D-manno-octulosonate and CTP: step 1/1. Its pathway is bacterial outer membrane biogenesis; lipopolysaccharide biosynthesis. Activates KDO (a required 8-carbon sugar) for incorporation into bacterial lipopolysaccharide in Gram-negative bacteria. This chain is 3-deoxy-manno-octulosonate cytidylyltransferase, found in Blochmanniella pennsylvanica (strain BPEN).